We begin with the raw amino-acid sequence, 300 residues long: MKIAILSRDGTLYSCKRLREAAIQRGHLVEILDPLSCYMNINPAASSIYYKGRKLPHFDAVIPRIGTAITFYGTAALRQFEMLGSYPLNESVAIARARDKLRSMQLLARQGIDLPVTGIAHSPDDTSDLIDMVGGAPLVVKLVEGTQGIGVVLAETRQAAESVIDAFRGLNAHILVQEYIKEAQGCDIRCLVVGDEVVAAIERRAKEGYFRSNLHRGGAASVASITPQEREIAIKAARTMALDVAGVDILRANRGPLVMEVNASPGLEGIEKTTGIDIAGKMIRWIERHATTEYCLKTGG.

The ATP-grasp domain occupies 104–287 (MQLLARQGID…IAGKMIRWIE (184 aa)). Residues lysine 141, 178 to 179 (EY), aspartate 187, and 211 to 213 (RSN) contribute to the ATP site. Mg(2+) is bound by residues aspartate 248, glutamate 260, and asparagine 262. Mn(2+) is bound by residues aspartate 248, glutamate 260, and asparagine 262.

The protein belongs to the RimK family. Mg(2+) is required as a cofactor. Mn(2+) serves as cofactor.

An L-glutamate ligase that catalyzes the ATP-dependent post-translational addition of glutamate residues to the C-terminus of ribosomal protein bS6 (RpsF). Is also able to catalyze the synthesis of poly-alpha-glutamate in vitro, via ATP hydrolysis from unprotected glutamate as substrate. The number of glutamate residues added to either RpsF or to poly-alpha-glutamate changes with pH. This chain is Ribosomal protein bS6--L-glutamate ligase, found in Shigella flexneri serotype 5b (strain 8401).